Reading from the N-terminus, the 302-residue chain is Proteasome subunit beta (302 aa).

Positions 1-10 (MAGRVREVSH) are enriched in basic and acidic residues. Positions 1-21 (MAGRVREVSHSSDQSGRLPAA) are disordered. Positions 1 to 67 (MAGRVREVSH…GPGAGEPPHA (67 aa)) are cleaved as a propeptide — removed in mature form; by autocatalysis. Threonine 68 functions as the Nucleophile in the catalytic mechanism. The interval 283 to 302 (RRGNPGGNPGISAVHGDGGN) is disordered.

This sequence belongs to the peptidase T1B family. The 20S proteasome core is composed of 14 alpha and 14 beta subunits that assemble into four stacked heptameric rings, resulting in a barrel-shaped structure. The two inner rings, each composed of seven catalytic beta subunits, are sandwiched by two outer rings, each composed of seven alpha subunits. The catalytic chamber with the active sites is on the inside of the barrel. Has a gated structure, the ends of the cylinder being occluded by the N-termini of the alpha-subunits. Is capped by the proteasome-associated ATPase, ARC.

The protein localises to the cytoplasm. The enzyme catalyses Cleavage of peptide bonds with very broad specificity.. The protein operates within protein degradation; proteasomal Pup-dependent pathway. Its activity is regulated as follows. The formation of the proteasomal ATPase ARC-20S proteasome complex, likely via the docking of the C-termini of ARC into the intersubunit pockets in the alpha-rings, may trigger opening of the gate for substrate entry. Interconversion between the open-gate and close-gate conformations leads to a dynamic regulation of the 20S proteasome proteolysis activity. Component of the proteasome core, a large protease complex with broad specificity involved in protein degradation. The sequence is that of Proteasome subunit beta from Kineococcus radiotolerans (strain ATCC BAA-149 / DSM 14245 / SRS30216).